The chain runs to 124 residues: Acidic phospholipase A2 (124 aa).

7 disulfides stabilise this stretch: C26-C116, C28-C44, C43-C95, C49-C124, C50-C88, C57-C81, and C75-C86. Y27, G29, and G31 together coordinate Ca(2+). H47 is a catalytic residue. D48 is a Ca(2+) binding site. D89 is a catalytic residue.

It belongs to the phospholipase A2 family. Group II subfamily. D49 sub-subfamily. As to quaternary structure, monomer. Requires Ca(2+) as cofactor. In terms of tissue distribution, expressed by the venom gland.

The protein localises to the secreted. It carries out the reaction a 1,2-diacyl-sn-glycero-3-phosphocholine + H2O = a 1-acyl-sn-glycero-3-phosphocholine + a fatty acid + H(+). Functionally, snake venom phospholipase A2 (PLA2) that acts in vivo as an anti-thrombotic agent. Inhibits platelet aggregation induced by ADP, arachidonic acid, and thrombin. PLA2 catalyzes the calcium-dependent hydrolysis of the 2-acyl groups in 3-sn-phosphoglycerides. This chain is Acidic phospholipase A2, found in Gloydius halys (Chinese water mocassin).